A 271-amino-acid polypeptide reads, in one-letter code: Orotidine 5'-phosphate decarboxylase (271 aa).

The Proton donor role is filled by Lys-95.

The protein belongs to the OMP decarboxylase family. Type 2 subfamily.

It carries out the reaction orotidine 5'-phosphate + H(+) = UMP + CO2. It functions in the pathway pyrimidine metabolism; UMP biosynthesis via de novo pathway; UMP from orotate: step 2/2. The polypeptide is Orotidine 5'-phosphate decarboxylase (Aromatoleum aromaticum (strain DSM 19018 / LMG 30748 / EbN1) (Azoarcus sp. (strain EbN1))).